A 464-amino-acid polypeptide reads, in one-letter code: Protein VAPYRIN-LIKE (464 aa).

The MSP domain occupies arginine 3–valine 124. ANK repeat units lie at residues asparagine 153–phenylalanine 182, asparagine 186–aspartate 215, valine 217–valine 246, glutamate 252–alanine 281, arginine 285–alanine 314, asparagine 318–alanine 347, arginine 349–arginine 368, asparagine 372–serine 401, and alanine 405–leucine 435.

In terms of tissue distribution, expressed in roots.

The protein localises to the cytoplasm. It is found in the nucleus. The protein resides in the cell membrane. In terms of biological role, may be involved in arbuscular mycorrhizal (AM) symbiosis with AM fungi and in nitrogen-fixing rhizobial bacteria symbiosis leading to the formation of root nodules. The polypeptide is Protein VAPYRIN-LIKE (Medicago truncatula (Barrel medic)).